A 1252-amino-acid chain; its full sequence is MSETNTTDAKTVPAEAEKKKEQSLPFFKLFSFADKFDYLLMFVGSLGAIVHGSSMPVFFLLFGQMVNGFGKNQMDLHQMVHEVSRYSLYFVYLGLVVCFSSYAEIACWMYSGERQVAALRKKYLEAVLKQDVGFFDTDARTGDIVFSVSTDTLLVQDAISEKVGNFIHYLSTFLAGLVVGFVSAWKLALLSVAVIPGIAFAGGLYAYTLTGITSKSRESYANAGVIAEQAIAQVRTVYSYVGESKALNAYSDAIQYTLKLGYKAGMAKGLGLGCTYGIACMSWALVFWYAGVFIRNGQTDGGKAFTAIFSAIVGGMSLGQSFSNLGAFSKGKAAGYKLMEIINQRPTIIQDPLDGKCLDQVHGNIEFKDVTFSYPSRPDVMIFRNFNIFFPSGKTVAVVGGSGSGKSTVVSLIERFYDPNSGQILLDGVEIKTLQLKFLREQIGLVNQEPALFATTILENILYGKPDATMVEVEAAASAANAHSFITLLPKGYDTQVGERGVQLSGGQKQRIAIARAMLKDPKILLLDEATSALDASSESIVQEALDRVMVGRTTVVVAHRLCTIRNVDSIAVIQQGQVVETGTHEELIAKSGAYASLIRFQEMVGTRDFSNPSTRRTRSTRLSHSLSTKSLSLRSGSLRNLSYSYSTGADGRIEMISNAETDRKTRAPENYFYRLLKLNSPEWPYSIMGAVGSILSGFIGPTFAIVMSNMIEVFYYTDYDSMERKTKEYVFIYIGAGLYAVGAYLIQHYFFSIMGENLTTRVRRMMLSAILRNEVGWFDEDEHNSSLIAARLATDAADVKSAIAERISVILQNMTSLLTSFIVAFIVEWRVSLLILGTFPLLVLANFAQQLSLKGFAGDTAKAHAKTSMIAGEGVSNIRTVAAFNAQSKILSLFCHELRVPQKRSLYRSQTSGFLFGLSQLALYGSEALILWYGAHLVSKGVSTFSKVIKVFVVLVITANSVAETVSLAPEIIRGGEAVGSVFSVLDRQTRIDPDDADADPVETIRGDIEFRHVDFAYPSRPDVMVFRDFNLRIRAGHSQALVGASGSGKSSVIAMIERFYDPLAGKVMIDGKDIRRLNLKSLRLKIGLVQQEPALFAATIFDNIAYGKDGATESEVIDAARAANAHGFISGLPEGYKTPVGERGVQLSGGQKQRIAIARAVLKNPTVLLLDEATSALDAESECVLQEALERLMRGRTTVVVAHRLSTIRGVDCIGVIQDGRIVEQGSHSELVSRPEGAYSRLLQLQTHRI.

N5 carries N-linked (GlcNAc...) asparagine glycosylation. Residues M41–K330 enclose the ABC transmembrane type-1 1 domain. 2 helical membrane-spanning segments follow: residues F42–F62 and L88–W108. D136 serves as a coordination point for ATP. Transmembrane regions (helical) follow at residues V163 to S183, L187 to Y207, C274 to I294, and I308 to F328. Brassinolide contacts are provided by Y276 and W283. The region spanning I365–F601 is the ABC transporter 1 domain. The ATP site is built by Y374, S376, G405, K406, S407, T408, and E529. A glycan (N-linked (GlcNAc...) asparagine) is linked at N641. The 289-residue stretch at S687–R975 folds into the ABC transmembrane type-1 2 domain. 2 helical membrane passes run I688–M708 and F732–F752. N758 carries an N-linked (GlcNAc...) asparagine glycan. D780 serves as a coordination point for ATP. N785 and N814 each carry an N-linked (GlcNAc...) asparagine glycan. The next 3 membrane-spanning stretches (helical) occupy residues F822–L842, G914–Y934, and V949–L969. Residues E965–I1252 form an interaction with FKBP42/TWD1 region. Residues I1010–Q1246 enclose the ABC transporter 2 domain. 6 residues coordinate ATP: Y1019, S1021, R1022, K1051, S1052, and S1053.

Belongs to the ABC transporter superfamily. ABCB family. Multidrug resistance exporter (TC 3.A.1.201) subfamily. Interacts with 1-naphthylphthalamic acid (NPA), and FKBP42/TWD1. Post-translationally, phosphorylated by PHOT1 in phototropic seedlings, to modulates auxin export and distribution and regulates leaf and petiole curling. Ubiquitous, mostly in shoot meristems. Present in the majority of stem cells, predominantly in a non-polar manner. Accumulates in seedlings roots and hypocotyls, and in roots apices and inflorescences.

Its subcellular location is the cell membrane. The enzyme catalyses (indol-3-yl)acetate(in) + ATP + H2O = (indol-3-yl)acetate(out) + ADP + phosphate + H(+). The catalysed reaction is brassinolide(in) + ATP + H2O = brassinolide(out) + ADP + phosphate + H(+). It catalyses the reaction 24-epi-brassinolide(in) + ATP + H2O = 24-epi-brassinolide(out) + ADP + phosphate + H(+). It carries out the reaction 24-epi-castasterone(in) + ATP + H2O = 24-epi-castasterone(out) + ADP + phosphate + H(+). The enzyme catalyses castasterone(in) + ATP + H2O = castasterone(out) + ADP + phosphate + H(+). Transport capacity is stimulated by the chaperone protein FKBP42/TWD1. ATPase activity is specifically activated by bioactive brassinosteroids in a dose-dependent manner, including brassinolide (BL), 24-epiBL and 24-epicastasterone (24-epiCS). Inhibited by vanadate. Functionally, brassinosteroid exporter that, in conjunction with ABCB1, supports the accumulation of exogenous brassinosteroids (BR) in the apoplast, thus promoting BR signaling initiation involving the specific receptor BRI1 and required for plant growth and stress responses. Mediates the transport of castasterone (CSA) and brassinolide (BL) across the plasma membrane. Auxin efflux transporter that acts as a negative regulator of light signaling to promote hypocotyl elongation by mediating leaf tip to petiole auxin flux. Required for the regulation of leaf position and morphology during PHOT1-mediated blue light responses involving auxin distribution, especially in low light fluence. Together with ABCB1 and in a FKBP42/TWD1-dependent manner, supports seed development by promoting stamen elongation and, to a lesser extent, anther dehiscence and pollen maturation, probably as auxin transporters. Contributes to the connective auxin transport (CAT) that ensures communication across the shoot system, including auxin loading at axillary bud apices to influence strigolactone-mediated bud outgrowth responses and shoot branching control. Mediates the accumulation of chlorophyll and anthocyanin, as well as the expression of genes in response to light. Participates in auxin efflux and thus regulates the polar auxin basipetal transport (from auxin-producing leaves to auxin-sensitive tissues, and from root tips to root elongating zone). Involved in diverse auxin-mediated responses including gravitropism, phototropism and lateral root formation. Required for the regulation of organ bending, such as gravitropic root bending. This is ABC transporter B family member 19 from Arabidopsis thaliana (Mouse-ear cress).